The sequence spans 70 residues: DNA-directed RNA polymerase subunit omega (70 aa).

It belongs to the RNA polymerase subunit omega family. In terms of assembly, the RNAP catalytic core consists of 2 alpha, 1 beta, 1 beta' and 1 omega subunit. When a sigma factor is associated with the core the holoenzyme is formed, which can initiate transcription.

It catalyses the reaction RNA(n) + a ribonucleoside 5'-triphosphate = RNA(n+1) + diphosphate. Functionally, promotes RNA polymerase assembly. Latches the N- and C-terminal regions of the beta' subunit thereby facilitating its interaction with the beta and alpha subunits. In Staphylococcus haemolyticus (strain JCSC1435), this protein is DNA-directed RNA polymerase subunit omega.